Reading from the N-terminus, the 407-residue chain is Serine/threonine transporter SstT (407 aa).

9 helical membrane passes run 10–30 (AKGN…LIGI), 42–62 (LGIL…FILI), 81–101 (IIIL…LANF), 141–161 (ALSS…GAAL), 179–199 (VLKI…GLVA), 218–238 (ILLV…IVFF), 245–267 (FPLI…SSAA), 288–308 (ISIP…IAIL), and 316–336 (VGIE…TFAA).

It belongs to the dicarboxylate/amino acid:cation symporter (DAACS) (TC 2.A.23) family.

It is found in the cell inner membrane. The catalysed reaction is L-serine(in) + Na(+)(in) = L-serine(out) + Na(+)(out). It carries out the reaction L-threonine(in) + Na(+)(in) = L-threonine(out) + Na(+)(out). Functionally, involved in the import of serine and threonine into the cell, with the concomitant import of sodium (symport system). The sequence is that of Serine/threonine transporter SstT from Campylobacter jejuni subsp. doylei (strain ATCC BAA-1458 / RM4099 / 269.97).